The chain runs to 252 residues: MRILLTNDDGIHAPGFEVLEDIARELSDEIWVCAPAEEQSGAGHSLTLHHPVRLRQLGERRYSVTGTPTDSVMLALRTVLEDKQPDLILSGVNRGANLGDDITYSGTASAAMEGALGGIKSIALSQVYKRDAEHELFDAARTYGADVIRKLIDAPFGDRTLININFPPLPADKVRGIRAVRQGFHDYSRGSVVKGRDPRGLEYYWFGLYAIEHTLDHGTDLEAIDEGFVSVTPLQLDLTQHSLLSVIGERFE.

Asp-8, Asp-9, Ser-40, and Asn-93 together coordinate a divalent metal cation.

Belongs to the SurE nucleotidase family. Requires a divalent metal cation as cofactor.

It is found in the cytoplasm. The enzyme catalyses a ribonucleoside 5'-phosphate + H2O = a ribonucleoside + phosphate. Nucleotidase that shows phosphatase activity on nucleoside 5'-monophosphates. This Erythrobacter litoralis (strain HTCC2594) protein is 5'-nucleotidase SurE.